We begin with the raw amino-acid sequence, 390 residues long: Chorismate synthase 2 (390 aa).

NADP(+) contacts are provided by R39 and R45. Residues 132 to 134, 253 to 254, G298, 313 to 317, and R339 each bind FMN; these read RSS, NA, and KPIPT.

Belongs to the chorismate synthase family. As to quaternary structure, homotetramer. The cofactor is FMNH2.

The enzyme catalyses 5-O-(1-carboxyvinyl)-3-phosphoshikimate = chorismate + phosphate. It functions in the pathway metabolic intermediate biosynthesis; chorismate biosynthesis; chorismate from D-erythrose 4-phosphate and phosphoenolpyruvate: step 7/7. Functionally, catalyzes the anti-1,4-elimination of the C-3 phosphate and the C-6 proR hydrogen from 5-enolpyruvylshikimate-3-phosphate (EPSP) to yield chorismate, which is the branch point compound that serves as the starting substrate for the three terminal pathways of aromatic amino acid biosynthesis. This reaction introduces a second double bond into the aromatic ring system. The sequence is that of Chorismate synthase 2 from Bacillus cereus (strain ATCC 14579 / DSM 31 / CCUG 7414 / JCM 2152 / NBRC 15305 / NCIMB 9373 / NCTC 2599 / NRRL B-3711).